A 300-amino-acid chain; its full sequence is ClpXP adapter protein SpxH (300 aa).

It belongs to the SpxH family. In terms of assembly, interacts with Spx.

The protein resides in the cytoplasm. Functionally, adapter protein required for efficient degradation of Spx by ClpXP under non-stress conditions. Interaction with Spx stabilizes Spx and exposes the C-terminus of Spx for recognition and proteolysis by ClpXP. This is ClpXP adapter protein SpxH from Bacillus licheniformis (strain ATCC 14580 / DSM 13 / JCM 2505 / CCUG 7422 / NBRC 12200 / NCIMB 9375 / NCTC 10341 / NRRL NRS-1264 / Gibson 46).